Here is a 243-residue protein sequence, read N- to C-terminus: Probable phosphatase CBO3379/CLC_3322 (243 aa).

His-8, His-10, His-16, His-41, Glu-74, His-102, His-132, Asp-192, and His-194 together coordinate Zn(2+).

Belongs to the PHP family. The cofactor is Zn(2+).

This chain is Probable phosphatase CBO3379/CLC_3322, found in Clostridium botulinum (strain Hall / ATCC 3502 / NCTC 13319 / Type A).